The sequence spans 249 residues: 3-deoxy-manno-octulosonate cytidylyltransferase (249 aa).

Belongs to the KdsB family.

It localises to the cytoplasm. The enzyme catalyses 3-deoxy-alpha-D-manno-oct-2-ulosonate + CTP = CMP-3-deoxy-beta-D-manno-octulosonate + diphosphate. The protein operates within nucleotide-sugar biosynthesis; CMP-3-deoxy-D-manno-octulosonate biosynthesis; CMP-3-deoxy-D-manno-octulosonate from 3-deoxy-D-manno-octulosonate and CTP: step 1/1. It functions in the pathway bacterial outer membrane biogenesis; lipopolysaccharide biosynthesis. Activates KDO (a required 8-carbon sugar) for incorporation into bacterial lipopolysaccharide in Gram-negative bacteria. This Aliivibrio salmonicida (strain LFI1238) (Vibrio salmonicida (strain LFI1238)) protein is 3-deoxy-manno-octulosonate cytidylyltransferase.